The primary structure comprises 534 residues: MERLADRVILVWGFKRSLLAIAAGAFAVLALPPFGFFAAMFLSFTLLVWLIDGAAASPDSGLVGRLWPAFATGWLFGFGYFVAGLWWLGHALLVDQDEFAWALPLAILGLPACLAIFYGLAVALARIFWSDGMGRIAALAAGFGLMEWLRSVVLTGFPWNAIGYGMMPVPLMMQSAHVIGAMGVTALAVFVFSAPALAGTRQGARNGTALAVLLFAAHLGYGAYALYVAPRAEALPEDKRPVVRLVQPDIDQAAKMDNDADRNAIFETHLKLSAETPKNGGRKPDIIVWPETAIPFILTDNQDALTRIADTLDDNQILIAGAVRAEEMGPGTPTRYYNSIYVIDGRGQIIAASDKVHLVPFGEYLPFEDLLTEFGIQNVVEMPGGFSAAVSRHLLALPGGLNLYPLICYEIIFPDEMTSDIEDANAILNITNDAWFGATPGPYQHFQQARVRAVETGLPLIRDANSGISAIVNAQGEIIAGLDLEQTGFIDATVDRFGLEAGTTFPRQTYFWLTEALLILIALVSRRGFISGLN.

Transmembrane regions (helical) follow at residues 18 to 38, 39 to 59, 74 to 94, 105 to 125, 127 to 147, 178 to 198, and 209 to 229; these read LLAI…GFFA, AMFL…ASPD, WLFG…ALLV, LAIL…VALA, IFWS…GLME, VIGA…PALA, and ALAV…LYVA. Residues 246 to 496 enclose the CN hydrolase domain; that stretch reads VQPDIDQAAK…TGFIDATVDR (251 aa). Catalysis depends on glutamate 291, which acts as the Proton acceptor. Lysine 355 is an active-site residue. The active-site Nucleophile is cysteine 408. Residues 504 to 524 form a helical membrane-spanning segment; the sequence is TFPRQTYFWLTEALLILIALV.

It belongs to the CN hydrolase family. Apolipoprotein N-acyltransferase subfamily.

The protein localises to the cell inner membrane. It carries out the reaction N-terminal S-1,2-diacyl-sn-glyceryl-L-cysteinyl-[lipoprotein] + a glycerophospholipid = N-acyl-S-1,2-diacyl-sn-glyceryl-L-cysteinyl-[lipoprotein] + a 2-acyl-sn-glycero-3-phospholipid + H(+). It functions in the pathway protein modification; lipoprotein biosynthesis (N-acyl transfer). Its function is as follows. Catalyzes the phospholipid dependent N-acylation of the N-terminal cysteine of apolipoprotein, the last step in lipoprotein maturation. This chain is Apolipoprotein N-acyltransferase, found in Rhizobium leguminosarum bv. trifolii (strain WSM2304).